The sequence spans 258 residues: Phosphoribosylaminoimidazole-succinocarboxamide synthase (258 aa).

The protein belongs to the SAICAR synthetase family.

The catalysed reaction is 5-amino-1-(5-phospho-D-ribosyl)imidazole-4-carboxylate + L-aspartate + ATP = (2S)-2-[5-amino-1-(5-phospho-beta-D-ribosyl)imidazole-4-carboxamido]succinate + ADP + phosphate + 2 H(+). The protein operates within purine metabolism; IMP biosynthesis via de novo pathway; 5-amino-1-(5-phospho-D-ribosyl)imidazole-4-carboxamide from 5-amino-1-(5-phospho-D-ribosyl)imidazole-4-carboxylate: step 1/2. The polypeptide is Phosphoribosylaminoimidazole-succinocarboxamide synthase (Rhizorhabdus wittichii (strain DSM 6014 / CCUG 31198 / JCM 15750 / NBRC 105917 / EY 4224 / RW1) (Sphingomonas wittichii)).